The following is a 359-amino-acid chain: Molybdenum import ATP-binding protein ModC (359 aa).

An ABC transporter domain is found at 1 to 229 (MLELNFSQQL…SALRPWLQRE (229 aa)). 31–38 (GLSGAGKT) provides a ligand contact to ATP. One can recognise a Mop domain in the interval 289 to 354 (SSSIRNILPV…IKSVSFNRQN (66 aa)).

This sequence belongs to the ABC transporter superfamily. Molybdate importer (TC 3.A.1.8) family. The complex is composed of two ATP-binding proteins (ModC), two transmembrane proteins (ModB) and a solute-binding protein (ModA).

The protein resides in the cell inner membrane. It carries out the reaction molybdate(out) + ATP + H2O = molybdate(in) + ADP + phosphate + H(+). In terms of biological role, part of the ABC transporter complex ModABC involved in molybdenum import. Responsible for energy coupling to the transport system. The chain is Molybdenum import ATP-binding protein ModC from Yersinia pestis bv. Antiqua (strain Antiqua).